The following is a 698-amino-acid chain: MAEEEPLFPALQEEDDFFRINSDRCSEELQDVKQVLFQEEGDSGSDYGSFKRLGKVLPRTVRAGNMLFPDLFQTNNLLFYERFETYKDYMLGDCKPSEVKEFIAEYLEKALEPSGWKAIWHTDVFDVLVEVTDVEFSSLNAIVRLCEPFLCESRVSSITHESINDLLEVKDQRVPLQELRVVFDESGLYDQTALTIEHVRFFYQQIWRPWDEEEEDYFDYFVRCVEPRLRLHYDILEDRIPSGLVAEYRSLLLQSEAVYMQFTNLRNNLSNKDSDSEAELDNVSMVEGMKMDDEMENLKRKLKLIKNPLLRYLFCYQRNSGSYNMQAKGPRPTGGKVIHVVSTSMSITMLQCLTRERLQPECSNKDLEIQFHRDPLEAVNACYEGDLVIICPGLYTIYGLINIMDSIEIEGYGLPDDVIIEKKGKGDSFVDCNGAHVKISNVKFVQHEAVEGIITIHSGTTELDNCVLQCETTGVTVKKCAELLMKYSDLYGAKGAGMEIYPGSKCTLIGNGIHHCRDGILIKDFIDVVYEIPKIIMENNVIHNNEGYAVVLVKPSPNFEKNSHTEELEGEHLDNNMIEEQASSNVLQPNLNEAMGVEDNAIEKSDHLEEEKSDPTIAKEEVECEYAIDCEEAEGNQVIATELVANTRRKTQLHKKRLSTLGIVTADDNNLTSQEIFVSIVGNQFKRNGKGSFGTFLF.

3 PbH1 repeats span residues 480–502 (CAEL…EIYP), 503–524 (GSKC…LIKD), and 532–554 (IPKI…VLVK).

It is found in the midbody. The protein localises to the cytoplasm. The protein resides in the cytoskeleton. Its subcellular location is the spindle. Functionally, may play a role in signaling pathways governing cellular proliferation. In Xenopus laevis (African clawed frog), this protein is SHC SH2 domain-binding protein 1 homolog B (shcbp1-b).